The chain runs to 348 residues: TEGPYFYVPMVNTTGIVRSPYEYPQYYLVNPAAYAVLGAYMFFLIILGFPINFLTLYVTLEHKKLRTPLNYILLNLAVADLFMVIGGFTTTMYSSMHGYFVLGRLGCNLEGFSATLGGMISLWSLAVLAIERWVVVCKPISNFRFGENHAIMGVSLTWTMALACTVPPLVGWSRYIPEGMQCSCGIDYYTRAEGFNNESFVLYMFFCHFMVPLIIIFFCYGRLLCAVKEAAAAQQESETTQRAEREVTRMVILMVIGYLVCWLPYASVAWFIFTHQGSEFGPLFMTIPAFFAKSSSIYNPVIYICMNKQFRNCMITTLFCGKNPFEGEEEGASSTKTEASSASSVSPA.

Residues 1–33 (TEGPYFYVPMVNTTGIVRSPYEYPQYYLVNPAA) lie on the Extracellular side of the membrane. Residue Asn12 is glycosylated (N-linked (GlcNAc...) asparagine). Residues 34 to 58 (YAVLGAYMFFLIILGFPINFLTLYV) traverse the membrane as a helical segment. At 59-70 (TLEHKKLRTPLN) the chain is on the cytoplasmic side. A helical membrane pass occupies residues 71–93 (YILLNLAVADLFMVIGGFTTTMY). Over 94–107 (SSMHGYFVLGRLGC) the chain is Extracellular. Cys107 and Cys184 form a disulfide bridge. Residues 108-130 (NLEGFSATLGGMISLWSLAVLAI) traverse the membrane as a helical segment. A 'Ionic lock' involved in activated form stabilization motif is present at residues 131-133 (ERW). At 131–149 (ERWVVVCKPISNFRFGENH) the chain is on the cytoplasmic side. The helical transmembrane segment at 150-170 (AIMGVSLTWTMALACTVPPLV) threads the bilayer. The Extracellular segment spans residues 171–199 (GWSRYIPEGMQCSCGIDYYTRAEGFNNES). Residue Asn197 is glycosylated (N-linked (GlcNAc...) asparagine). Residues 200 to 221 (FVLYMFFCHFMVPLIIIFFCYG) form a helical membrane-spanning segment. Residues 222–249 (RLLCAVKEAAAAQQESETTQRAEREVTR) lie on the Cytoplasmic side of the membrane. Residues 250 to 271 (MVILMVIGYLVCWLPYASVAWF) form a helical membrane-spanning segment. Over 272 to 283 (IFTHQGSEFGPL) the chain is Extracellular. A helical membrane pass occupies residues 284–305 (FMTIPAFFAKSSSIYNPVIYIC). Lys293 carries the post-translational modification N6-(retinylidene)lysine. Residues 306–348 (MNKQFRNCMITTLFCGKNPFEGEEEGASSTKTEASSASSVSPA) lie on the Cytoplasmic side of the membrane. Cys320 carries the S-palmitoyl cysteine lipid modification. The segment at 327–348 (GEEEGASSTKTEASSASSVSPA) is disordered. The segment covering 332–348 (ASSTKTEASSASSVSPA) has biased composition (low complexity).

The protein belongs to the G-protein coupled receptor 1 family. Opsin subfamily. Phosphorylated on some or all of the serine and threonine residues present in the C-terminal region. Post-translationally, contains one covalently linked retinal chromophore.

The protein localises to the membrane. The protein resides in the cell projection. Its subcellular location is the cilium. It localises to the photoreceptor outer segment. Its function is as follows. Photoreceptor required for image-forming vision at low light intensity. While most salt water fish species use retinal as chromophore, most freshwater fish use 3-dehydroretinal, or a mixture of retinal and 3-dehydroretinal. Light-induced isomerization of 11-cis to all-trans retinal triggers a conformational change that activates signaling via G-proteins. Subsequent receptor phosphorylation mediates displacement of the bound G-protein alpha subunit by arrestin and terminates signaling. The sequence is that of Rhodopsin (rho) from Neoniphon argenteus (Clearfin squirrelfish).